The following is a 48-amino-acid chain: Large ribosomal subunit protein eL40 (48 aa).

This sequence belongs to the eukaryotic ribosomal protein eL40 family.

In Methanosphaerula palustris (strain ATCC BAA-1556 / DSM 19958 / E1-9c), this protein is Large ribosomal subunit protein eL40.